The sequence spans 472 residues: Methanethiol oxidase (472 aa).

At Ala2 the chain carries N-acetylalanine. 3 positions are modified to phosphoserine: Ser111, Ser371, and Ser467.

This sequence belongs to the selenium-binding protein family. Interacts with USP33. In terms of processing, the N-terminus is blocked.

It localises to the nucleus. It is found in the cytoplasm. The protein resides in the cytosol. The protein localises to the membrane. It catalyses the reaction methanethiol + O2 + H2O = hydrogen sulfide + formaldehyde + H2O2 + H(+). Its pathway is organosulfur degradation. Its function is as follows. Catalyzes the oxidation of methanethiol, an organosulfur compound known to be produced in substantial amounts by gut bacteria. Selenium-binding protein which may be involved in the sensing of reactive xenobiotics in the cytoplasm. May be involved in intra-Golgi protein transport. This Pongo abelii (Sumatran orangutan) protein is Methanethiol oxidase (SELENBP1).